A 1755-amino-acid chain; its full sequence is MESQQLSQHSPISHGSACASVTSKEVHTNQDPLDVSASKIQEYDKASTKANSQQTTTPASSAVPENPHHASPQTAQSHSPQNGPYQQQCMMTQNQANPSGWSFYGRPSMIPYTPYQMSPMYFPPGPHSQFPQYPSSVGTPLSTPSPESGNTFTDSSSADSDMTSTKKYVRPPPMLTSPNDFLNWVKTYIKFLQNSNLGDIIPTATRKAVRQMTDDELTFLCHTFQLFAPSQFLPTWVKDILSADYTDIMKILSKSINKMQSDTQEVNDITTLATLHYNGSTPADAFEAEVTNILDRLNNNGIPINNKVACQFIMRGLSGEYKFLRYARHRYIHMTVADLFSDIHSMYEEQQESKRNKSTYRRNPSDEKKDSRTYTNTTKPKSITRNSQKPNNSQSRTARAHNVSTSNNSSGPDNDLIRGSTTEPIQLKNKHDLHLGQELTESTVNHTNHSDDELPGHLLLDSGASRTLIRSAHHIHSASSNPGINVVDAQKRNIPINAIGDLQFHFQDNTKTSIKVLHTPNIAYDLLSLNELAAVDITACFTKNVLERSDGTVLAPIVKYGDFYWVSKKYLLPSNISVPTINNVHTSESTRKYPYPFIHRMLAHANAQTIRYSLKNNTITYFNESDVDWSSAIDYQCPDCLIGKSTKHRHIKGSRLKYQNSYEPFQYLHTDIFGPVHNLPKSAPSYFISFTDETTKFRWVYPLHDRREDSILDVFTTILAFIKNQFQASVLVIQMDRGSEYTNRTLHKFLEKNGITPCYTTTADSRAHGVAERLNRTLLDDCRTQLQCSGLPNHLWFSAIEFSTIVRNSLASPKSKKSARQHAGLAGLDISTLLPFGQPVIVNDHNPNSKIHPRGIPGYALHPSRNSYGYIIYLPSLKKTVDTTNYVILQGKESRLDQFNYDALTFDEDLNRLTASYQSFIASNEIQQSDDLNIESDHDFQSDIELHPEQPRNVLSKAVSPTDSTPPSTHTEDSKRVSKTNIRAPREVDPNISKSNILPSKKRSSTPQISDIESTGSGGMHRLDVPLLAPMSQYNTHESSHTSKSKDFRHSDSYSDNETNHTNVPISSTGGTNNKTVPQTSEQETEKRIIHRSPSIDTSSSESNSLHHVVPIKTSDTCPKENTEESIIADLPLPDLPPEPPTKLSDSFKELPPINSRQTNSSLGGIGDSNAYTTINSKKRSLEDNETEIKVSRDTWNTKNMRSLEPPRSKKRIHLIAAVKAVKSIKPIRTTLRYDEAITYNKDIKEKEKYIEAYHKEVNQLLKMKTWDTDRYYDRKEIDPKRVINSMFIFNRKRDGTHKARFVARGDIQHPDTYDSGMQSNTVHHYALMTSLSLALDNNYYITQLDISSAYLYADIKEELYIRPPPHLGMNDKLIRLKKSLYGLKQSGANWYETIKSYLIQQCGMEEVRGWSCVFKNSQVTICLFVDDMVLFSKNLNSNKRIIEKLKMQYDTKIINLGESDEEIQYDILGLEIKYQRGKYMKLGMENSLTEKIPKLNVPLNPKGRKLSAPGQPGLYIDQQELELEEDDYKMKVHEMQKLIGLASYVGYKFRFDLLYYINTLAQHILFPSKQVLDMTYELIQFIWNTRDKQLIWHKSKPVKPTNKLVVISDASYGNQPYYKSQIGNIYLLNGKVIGGKSTKASLTCTSTTEAEIHAISESVPLLNNLSYLIQELDKKPITKGLLTDSKSTISIIISNNEEKFRNRFFGTKAMRLRDEVSGNHLHVCYIETKKNIADVMTKPLPIKTFKLLTNKWIH.

Composition is skewed to polar residues over residues 1–23, 48–60, 71–86, and 131–152; these read MESQQLSQHSPISHGSACASVTS, TKANSQQTTTPAS, SPQTAQSHSPQNGPYQ, and PQYPSSVGTPLSTPSPESGNTF. 3 disordered regions span residues 1 to 86, 131 to 171, and 350 to 420; these read MESQ…GPYQ, PQYP…YVRP, and QQES…IRGS. Residues 153-165 show a composition bias toward low complexity; sequence TDSSSADSDMTST. The tract at residues 299 to 401 is RNA-binding; the sequence is NNGIPINNKV…NSQSRTARAH (103 aa). The span at 363–372 shows a compositional bias: basic and acidic residues; sequence NPSDEKKDSR. Residues 373 to 412 are compositionally biased toward polar residues; that stretch reads TYTNTTKPKSITRNSQKPNNSQSRTARAHNVSTSNNSSGP. Asp461 acts as the For protease activity; shared with dimeric partner in catalysis. Residues 583-640 are integrase-type zinc finger-like; the sequence is NVHTSESTRKYPYPFIHRMLAHANAQTIRYSLKNNTITYFNESDVDWSSAIDYQCPDC. Residues 660 to 835 form the Integrase catalytic domain; the sequence is NSYEPFQYLH…AGLDISTLLP (176 aa). Residues Asp671 and Asp736 each contribute to the Mg(2+) site. Disordered regions lie at residues 956 to 1120 and 1146 to 1172; these read SKAV…TCPK and DSFKELPPINSRQTNSSLGGIGDSNAY. The segment covering 960-969 has biased composition (low complexity); sequence SPTDSTPPST. Residues 1005-1015 show a composition bias toward polar residues; it reads STPQISDIEST. Basic and acidic residues predominate over residues 1038-1053; sequence ESSHTSKSKDFRHSDS. Composition is skewed to polar residues over residues 1054 to 1082 and 1095 to 1106; these read YSDNETNHTNVPISSTGGTNNKTVPQTSE and SIDTSSSESNSL. The short motif at 1178–1212 is the Bipartite nuclear localization signal element; the sequence is KKRSLEDNETEIKVSRDTWNTKNMRSLEPPRSKKR. In terms of domain architecture, Reverse transcriptase Ty1/copia-type spans 1338–1476; that stretch reads NNYYITQLDI…DILGLEIKYQ (139 aa). 6 residues coordinate Mg(2+): Asp1346, Asp1427, Asp1428, Asp1610, Glu1652, and Asp1685. The RNase H Ty1/copia-type domain occupies 1610-1752; that stretch reads DASYGNQPYY…IKTFKLLTNK (143 aa).

In terms of assembly, the capsid protein forms a homotrimer, from which the VLPs are assembled. The protease is a homodimer, whose active site consists of two apposed aspartic acid residues. Post-translationally, initially, virus-like particles (VLPs) are composed of the structural unprocessed proteins Gag and Gag-Pol, and also contain the host initiator methionine tRNA (tRNA(i)-Met) which serves as a primer for minus-strand DNA synthesis, and a dimer of genomic Ty RNA. Processing of the polyproteins occurs within the particle and proceeds by an ordered pathway, called maturation. First, the protease (PR) is released by autocatalytic cleavage of the Gag-Pol polyprotein yielding capsid protein p45 and a Pol-p154 precursor protein. This cleavage is a prerequisite for subsequent processing of Pol-p154 at the remaining sites to release the mature structural and catalytic proteins. Maturation takes place prior to the RT reaction and is required to produce transposition-competent VLPs.

The protein localises to the cytoplasm. It is found in the nucleus. It carries out the reaction DNA(n) + a 2'-deoxyribonucleoside 5'-triphosphate = DNA(n+1) + diphosphate. The enzyme catalyses Endonucleolytic cleavage to 5'-phosphomonoester.. Capsid protein (CA) is the structural component of the virus-like particle (VLP), forming the shell that encapsulates the retrotransposons dimeric RNA genome. The particles are assembled from trimer-clustered units and there are holes in the capsid shells that allow for the diffusion of macromolecules. CA also has nucleocapsid-like chaperone activity, promoting primer tRNA(i)-Met annealing to the multipartite primer-binding site (PBS), dimerization of Ty1 RNA and initiation of reverse transcription. Functionally, the aspartyl protease (PR) mediates the proteolytic cleavages of the Gag and Gag-Pol polyproteins after assembly of the VLP. Its function is as follows. Reverse transcriptase/ribonuclease H (RT) is a multifunctional enzyme that catalyzes the conversion of the retro-elements RNA genome into dsDNA within the VLP. The enzyme displays a DNA polymerase activity that can copy either DNA or RNA templates, and a ribonuclease H (RNase H) activity that cleaves the RNA strand of RNA-DNA heteroduplexes during plus-strand synthesis and hydrolyzes RNA primers. The conversion leads to a linear dsDNA copy of the retrotransposon that includes long terminal repeats (LTRs) at both ends. In terms of biological role, integrase (IN) targets the VLP to the nucleus, where a subparticle preintegration complex (PIC) containing at least integrase and the newly synthesized dsDNA copy of the retrotransposon must transit the nuclear membrane. Once in the nucleus, integrase performs the integration of the dsDNA into the host genome. The sequence is that of Transposon Ty1-NL1 Gag-Pol polyprotein (TY1B-NL1) from Saccharomyces cerevisiae (strain ATCC 204508 / S288c) (Baker's yeast).